Here is a 137-residue protein sequence, read N- to C-terminus: Large ribosomal subunit protein uL16 (137 aa).

The protein belongs to the universal ribosomal protein uL16 family. As to quaternary structure, part of the 50S ribosomal subunit.

In terms of biological role, binds 23S rRNA and is also seen to make contacts with the A and possibly P site tRNAs. The protein is Large ribosomal subunit protein uL16 of Baumannia cicadellinicola subsp. Homalodisca coagulata.